A 297-amino-acid polypeptide reads, in one-letter code: tRNA pseudouridine synthase B (297 aa).

Residue Asp39 is the Nucleophile of the active site.

This sequence belongs to the pseudouridine synthase TruB family. Type 1 subfamily.

It catalyses the reaction uridine(55) in tRNA = pseudouridine(55) in tRNA. Its function is as follows. Responsible for synthesis of pseudouridine from uracil-55 in the psi GC loop of transfer RNAs. This Lactobacillus gasseri (strain ATCC 33323 / DSM 20243 / BCRC 14619 / CIP 102991 / JCM 1131 / KCTC 3163 / NCIMB 11718 / NCTC 13722 / AM63) protein is tRNA pseudouridine synthase B.